Reading from the N-terminus, the 184-residue chain is ATP synthase subunit b, chloroplastic (184 aa).

A helical transmembrane segment spans residues 31 to 53 (LINLSVVLGVLIYFGKGVLSNLL).

It belongs to the ATPase B chain family. As to quaternary structure, F-type ATPases have 2 components, F(1) - the catalytic core - and F(0) - the membrane proton channel. F(1) has five subunits: alpha(3), beta(3), gamma(1), delta(1), epsilon(1). F(0) has four main subunits: a(1), b(1), b'(1) and c(10-14). The alpha and beta chains form an alternating ring which encloses part of the gamma chain. F(1) is attached to F(0) by a central stalk formed by the gamma and epsilon chains, while a peripheral stalk is formed by the delta, b and b' chains.

It localises to the plastid. The protein resides in the chloroplast thylakoid membrane. Functionally, f(1)F(0) ATP synthase produces ATP from ADP in the presence of a proton or sodium gradient. F-type ATPases consist of two structural domains, F(1) containing the extramembraneous catalytic core and F(0) containing the membrane proton channel, linked together by a central stalk and a peripheral stalk. During catalysis, ATP synthesis in the catalytic domain of F(1) is coupled via a rotary mechanism of the central stalk subunits to proton translocation. Component of the F(0) channel, it forms part of the peripheral stalk, linking F(1) to F(0). In Cycas taitungensis (Prince sago), this protein is ATP synthase subunit b, chloroplastic.